Here is a 212-residue protein sequence, read N- to C-terminus: MPIREIRHPLIRHKLGLMRRADISTKNFRELAQEVGALLTYEATKDLPLESYEIPGWCGPVQVEKIAGKKITVVPILRAGIGMLEGVLSLIPGAKVSAVGVARNEETLQAHTYLEKLVPEIDERLAMIIDPMLATGSSMVATIDLLKKAGCRDIRAMVLVAAPEGIAAVEQAHPDVTIYTASIDQKLNEHGYIIPGLGDAGDKIFGTKQKDS.

5-phospho-alpha-D-ribose 1-diphosphate-binding positions include R78, R103, and 130-138 (DPMLATGSS). Uracil is bound by residues I193 and 198 to 200 (GDA). D199 is a binding site for 5-phospho-alpha-D-ribose 1-diphosphate.

Belongs to the UPRTase family. Requires Mg(2+) as cofactor.

The catalysed reaction is UMP + diphosphate = 5-phospho-alpha-D-ribose 1-diphosphate + uracil. The protein operates within pyrimidine metabolism; UMP biosynthesis via salvage pathway; UMP from uracil: step 1/1. Allosterically activated by GTP. Catalyzes the conversion of uracil and 5-phospho-alpha-D-ribose 1-diphosphate (PRPP) to UMP and diphosphate. The protein is Uracil phosphoribosyltransferase of Pseudomonas fluorescens (strain ATCC BAA-477 / NRRL B-23932 / Pf-5).